The chain runs to 621 residues: Nitrate reductase [NADH] 1 (621 aa).

One can recognise a Cytochrome b5 heme-binding domain in the interval 249-324 (GKEFTMSEVR…LDTYRIGELI (76 aa)). Residues histidine 284 and histidine 307 each contribute to the heme site. One can recognise an FAD-binding FR-type domain in the interval 361-473 (REKIHCRLVG…KGPLGHVEYT (113 aa)). Residues 413-416 (RAYT), 430-432 (LVK), phenylalanine 435, 447-449 (LMT), serine 497, and threonine 500 each bind FAD.

This sequence belongs to the nitrate reductase family. As to quaternary structure, homodimer. It depends on FAD as a cofactor. Heme serves as cofactor. Requires Mo-molybdopterin as cofactor.

It catalyses the reaction nitrite + NAD(+) + H2O = nitrate + NADH + H(+). In terms of biological role, nitrate reductase is a key enzyme involved in the first step of nitrate assimilation in plants, fungi and bacteria. The sequence is that of Nitrate reductase [NADH] 1 from Zea mays (Maize).